Reading from the N-terminus, the 303-residue chain is UDP-3-O-acyl-N-acetylglucosamine deacetylase (303 aa).

3 residues coordinate Zn(2+): His78, His237, and Asp241. His264 functions as the Proton donor in the catalytic mechanism.

The protein belongs to the LpxC family. It depends on Zn(2+) as a cofactor.

It carries out the reaction a UDP-3-O-[(3R)-3-hydroxyacyl]-N-acetyl-alpha-D-glucosamine + H2O = a UDP-3-O-[(3R)-3-hydroxyacyl]-alpha-D-glucosamine + acetate. It functions in the pathway glycolipid biosynthesis; lipid IV(A) biosynthesis; lipid IV(A) from (3R)-3-hydroxytetradecanoyl-[acyl-carrier-protein] and UDP-N-acetyl-alpha-D-glucosamine: step 2/6. Functionally, catalyzes the hydrolysis of UDP-3-O-myristoyl-N-acetylglucosamine to form UDP-3-O-myristoylglucosamine and acetate, the committed step in lipid A biosynthesis. In Pseudomonas putida (strain GB-1), this protein is UDP-3-O-acyl-N-acetylglucosamine deacetylase.